A 102-amino-acid chain; its full sequence is Large ribosomal subunit protein bL21 (102 aa).

Belongs to the bacterial ribosomal protein bL21 family. Part of the 50S ribosomal subunit. Contacts protein L20.

In terms of biological role, this protein binds to 23S rRNA in the presence of protein L20. The protein is Large ribosomal subunit protein bL21 of Azorhizobium caulinodans (strain ATCC 43989 / DSM 5975 / JCM 20966 / LMG 6465 / NBRC 14845 / NCIMB 13405 / ORS 571).